Consider the following 194-residue polypeptide: IMP cyclohydrolase (194 aa).

The protein belongs to the archaeal IMP cyclohydrolase family.

The enzyme catalyses IMP + H2O = 5-formamido-1-(5-phospho-D-ribosyl)imidazole-4-carboxamide. Its pathway is purine metabolism; IMP biosynthesis via de novo pathway; IMP from 5-formamido-1-(5-phospho-D-ribosyl)imidazole-4-carboxamide: step 1/1. In terms of biological role, catalyzes the cyclization of 5-formylamidoimidazole-4-carboxamide ribonucleotide to IMP. This chain is IMP cyclohydrolase, found in Halobacterium salinarum (strain ATCC 29341 / DSM 671 / R1).